Consider the following 298-residue polypeptide: ADP/ATP translocase 3 (298 aa).

At methionine 1 the chain carries N-acetylmethionine. Topologically, residues 1-7 (MTEQAIS) are mitochondrial intermembrane. An N-acetylthreonine; in ADP/ATP translocase 3, N-terminally processed modification is found at threonine 2. The stretch at 6–98 (ISFAKDFLAG…FAFKDKYKQI (93 aa)) is one Solcar 1 repeat. Residues 8-37 (FAKDFLAGGIAAAISKTAVAPIERVKLLLQ) form a helical membrane-spanning segment. The Mitochondrial matrix segment spans residues 38–74 (VQHASKQIAADKQYKGIVDCIVRIPKEQGVLSFWRGN). Lysine 52 is subject to N6,N6,N6-trimethyllysine. Residues 75-99 (LANVIRYFPTQALNFAFKDKYKQIF) form a helical membrane-spanning segment. ADP-binding residues include arginine 80 and lysine 92. Residues 100 to 109 (LGGVDKHTQF) are Mitochondrial intermembrane-facing. An N6-acetyllysine modification is found at lysine 105. A helical membrane pass occupies residues 110-130 (WRYFAGNLASGGAAGATSLCF). Solcar repeat units follow at residues 111 to 201 (RYFA…AKGM) and 212 to 297 (VSWM…LKKV). At 131–178 (VYPLDFARTRLAADVGKSGTEREFRGLGDCLVKITKSDGIRGLYQGFS) the chain is on the mitochondrial matrix side. Residues 179–199 (VSVQGIIIYRAAYFGVYDTAK) traverse the membrane as a helical segment. Residues 200–210 (GMLPDPKNTHI) lie on the Mitochondrial intermembrane side of the membrane. A helical membrane pass occupies residues 211-231 (VVSWMIAQTVTAVAGVVSYPF). Over 232 to 273 (DTVRRRMMMQSGRKGADIMYTGTVDCWRKIFRDEGGKAFFKG) the chain is Mitochondrial matrix. Arginine 235 lines the ADP pocket. Residues 235–240 (RRRMMM) are important for transport activity. The Nucleotide carrier signature motif motif lies at 235–240 (RRRMMM). At lysine 268 the chain carries N6-acetyllysine. The helical transmembrane segment at 274-291 (AWSNVLRGMGGAFVLVLY) threads the bilayer. Residues 292–298 (DELKKVI) lie on the Mitochondrial intermembrane side of the membrane.

Belongs to the mitochondrial carrier (TC 2.A.29) family. In terms of assembly, monomer. Found in a complex with ARL2, ARL2BP and SLC25A6/ANT3. As to quaternary structure, (Microbial infection) Interacts with influenza A virus PB1-F2 protein. (Microbial infection) Interacts with HIV-1 Vpr. Trimethylated by ANTKMT at Lys-52. Expressed in erythrocytes (at protein level).

It localises to the mitochondrion inner membrane. The protein localises to the membrane. The catalysed reaction is ADP(in) + ATP(out) = ADP(out) + ATP(in). The enzyme catalyses H(+)(in) = H(+)(out). Its activity is regulated as follows. The matrix-open state (m-state) is inhibited by the membrane-permeable bongkrekic acid (BKA). The cytoplasmic-open state (c-state) is inhibited by the membrane-impermeable toxic inhibitor carboxyatractyloside (CATR). Proton transporter activity is inhibited by ADP:ATP antiporter activity. In terms of biological role, ADP:ATP antiporter that mediates import of ADP into the mitochondrial matrix for ATP synthesis, and export of ATP out to fuel the cell. Cycles between the cytoplasmic-open state (c-state) and the matrix-open state (m-state): operates by the alternating access mechanism with a single substrate-binding site intermittently exposed to either the cytosolic (c-state) or matrix (m-state) side of the inner mitochondrial membrane. In addition to its ADP:ATP antiporter activity, also involved in mitochondrial uncoupling and mitochondrial permeability transition pore (mPTP) activity. Plays a role in mitochondrial uncoupling by acting as a proton transporter: proton transport uncouples the proton flows via the electron transport chain and ATP synthase to reduce the efficiency of ATP production and cause mitochondrial thermogenesis. Proton transporter activity is inhibited by ADP:ATP antiporter activity, suggesting that SLC25A6/ANT3 acts as a master regulator of mitochondrial energy output by maintaining a delicate balance between ATP production (ADP:ATP antiporter activity) and thermogenesis (proton transporter activity). Proton transporter activity requires free fatty acids as cofactor, but does not transport it. Also plays a key role in mPTP opening, a non-specific pore that enables free passage of the mitochondrial membranes to solutes of up to 1.5 kDa, and which contributes to cell death. It is however unclear if SLC25A6/ANT3 constitutes a pore-forming component of mPTP or regulates it. The protein is ADP/ATP translocase 3 of Homo sapiens (Human).